The sequence spans 735 residues: MPLAQLKEPWPLMELVPLDPENGQASGEEAGLQPSKDEGILKEISITHHVKAGSEKADPSHFELLKVLGQGSFGKVFLVRKVTRPDNGHLYAMKVLKKATLKVRDRVRTKMERDILADVNHPFVVKLHYAFQTEGKLYLILDFLRGGDLFTRLSKEVMFTEEDVKFYLAELALGLDHLHSLGIIYRDLKPENILLDEEGHIKLTDFGLSKEAIDHEKKAYSFCGTVEYMAPEVVNRQGHTHSADWWSYGVLMFEMLTGSLPFQGKDRKETMTLILKAKLGMPQFLSTEAQSLLRALFKRNPANRLGSGPDGAEEIKRHIFYSTIDWNKLYRREIKPPFKPAVAQPDDTFYFDTEFTSRTPRDSPGIPPSAGAHQLFRGFSFVATGLMEDDSKPRATQAPLHSVVQQLHGKNLVFSDGYIVKETIGVGSYSVCKRCVHKATNMEYAVKVIDKSKRDPSEEIEILLRYGQHPNIITLKDVYDDSKHVYLVTELMRGGELLDKILRQKFFSEREASFVLYTISKTVEYLHSQGVVHRDLKPSNILYVDESGNPECLRICDFGFAKQLRAENGLLMTPCYTANFVAPEVLKRQGYDEGCDIWSLGVLLYTMLAGYTPFANGPSDTPEEILTRISSGKFTLSGGNWNTVSETAKDLVSKMLHVDPHQRLTAKQVLQHPWITQKDKLPQSQLSHQDLQLVKGGMAATYSALSSSKPTPQLKPIESSILAQRRVRKLPSTTL.

Ser-54 bears the Phosphoserine mark. The region spanning Phe-62 to Tyr-321 is the Protein kinase 1 domain. Residues Leu-68–Val-76 and Lys-94 each bind ATP. Asp-187 serves as the catalytic Proton acceptor. The residue at position 221 (Ser-221) is a Phosphoserine; by PDPK1. Ser-307 is modified (phosphoserine). The 70-residue stretch at Ser-322–Ser-391 folds into the AGC-kinase C-terminal domain. At Thr-359 the chain carries Phosphothreonine. Phosphoserine is present on Ser-363. Phosphoserine; by autocatalysis occurs at positions 369 and 380. In terms of domain architecture, Protein kinase 2 spans Tyr-418–Ile-675. ATP is bound by residues Ile-424 to Cys-432 and Lys-447. Asp-535 (proton acceptor) is an active-site residue. Thr-573 is modified (phosphothreonine). Position 732 is a phosphoserine (Ser-732).

This sequence belongs to the protein kinase superfamily. AGC Ser/Thr protein kinase family. S6 kinase subfamily. In terms of assembly, forms a complex with either MAPK1/ERK2 or MAPK3/ERK1 in quiescent cells. Transiently dissociates following mitogenic stimulation. Interacts with ETV1/ER81 and FGFR1. It depends on Mg(2+) as a cofactor. In terms of processing, activated by phosphorylation at Ser-221 by PDPK1. Autophosphorylated on Ser-380, as part of the activation process. May be phosphorylated at Thr-359 and Ser-363 by MAPK1/ERK2 and MAPK3/ERK1. Post-translationally, N-terminal myristoylation results in an activated kinase in the absence of added growth factors.

The protein resides in the nucleus. It localises to the cytoplasm. It catalyses the reaction L-seryl-[protein] + ATP = O-phospho-L-seryl-[protein] + ADP + H(+). It carries out the reaction L-threonyl-[protein] + ATP = O-phospho-L-threonyl-[protein] + ADP + H(+). Its activity is regulated as follows. Upon extracellular signal or mitogen stimulation, phosphorylated at Thr-573 in the C-terminal kinase domain (CTKD) by MAPK1/ERK2 and MAPK3/ERK1. The activated CTKD then autophosphorylates Ser-380, allowing binding of PDPK1, which in turn phosphorylates Ser-221 in the N-terminal kinase domain (NTDK) leading to the full activation of the protein and subsequent phosphorylation of the substrates by the NTKD. Serine/threonine-protein kinase that acts downstream of ERK (MAPK1/ERK2 and MAPK3/ERK1) signaling and mediates mitogenic and stress-induced activation of the transcription factors CREB1, ETV1/ER81 and NR4A1/NUR77, regulates translation through RPS6 and EIF4B phosphorylation, and mediates cellular proliferation, survival, and differentiation by modulating mTOR signaling and repressing pro-apoptotic function of BAD and DAPK1. In fibroblast, is required for EGF-stimulated phosphorylation of CREB1, which results in the subsequent transcriptional activation of several immediate-early genes. In response to mitogenic stimulation (EGF and PMA), phosphorylates and activates NR4A1/NUR77 and ETV1/ER81 transcription factors and the cofactor CREBBP. Upon insulin-derived signal, acts indirectly on the transcription regulation of several genes by phosphorylating GSK3B at 'Ser-9' and inhibiting its activity. Phosphorylates RPS6 in response to serum or EGF via an mTOR-independent mechanism and promotes translation initiation by facilitating assembly of the pre-initiation complex. In response to insulin, phosphorylates EIF4B, enhancing EIF4B affinity for the EIF3 complex and stimulating cap-dependent translation. Is involved in the mTOR nutrient-sensing pathway by directly phosphorylating TSC2 at 'Ser-1798', which potently inhibits TSC2 ability to suppress mTOR signaling, and mediates phosphorylation of RPTOR, which regulates mTORC1 activity and may promote rapamycin-sensitive signaling independently of the PI3K/AKT pathway. Also involved in feedback regulation of mTORC1 and mTORC2 by phosphorylating DEPTOR. Mediates cell survival by phosphorylating the pro-apoptotic proteins BAD and DAPK1 and suppressing their pro-apoptotic function. Promotes the survival of hepatic stellate cells by phosphorylating CEBPB in response to the hepatotoxin carbon tetrachloride (CCl4). Mediates induction of hepatocyte prolifration by TGFA through phosphorylation of CEBPB. Is involved in cell cycle regulation by phosphorylating the CDK inhibitor CDKN1B, which promotes CDKN1B association with 14-3-3 proteins and prevents its translocation to the nucleus and inhibition of G1 progression. Phosphorylates EPHA2 at 'Ser-897', the RPS6KA-EPHA2 signaling pathway controls cell migration. In response to mTORC1 activation, phosphorylates EIF4B at 'Ser-406' and 'Ser-422' which stimulates bicarbonate cotransporter SLC4A7 mRNA translation, increasing SLC4A7 protein abundance and function. This chain is Ribosomal protein S6 kinase alpha-1 (Rps6ka1), found in Rattus norvegicus (Rat).